We begin with the raw amino-acid sequence, 445 residues long: Eukaryotic translation initiation factor 3 subunit E (445 aa).

The 174-residue stretch at 230–403 (FFNHVKGRDL…GHVVMGAQPL (174 aa)) folds into the PCI domain.

It belongs to the eIF-3 subunit E family. Component of the eukaryotic translation initiation factor 3 (eIF-3) complex.

The protein resides in the cytoplasm. Its function is as follows. Component of the eukaryotic translation initiation factor 3 (eIF-3) complex, which is involved in protein synthesis of a specialized repertoire of mRNAs and, together with other initiation factors, stimulates binding of mRNA and methionyl-tRNAi to the 40S ribosome. The eIF-3 complex specifically targets and initiates translation of a subset of mRNAs involved in cell proliferation. The protein is Eukaryotic translation initiation factor 3 subunit E (eIF3-S6) of Bombyx mori (Silk moth).